Reading from the N-terminus, the 281-residue chain is DegV domain-containing protein (281 aa).

A DegV domain is found at 3–280 (WKIVSDSGCD…EGGLLMGYEI (278 aa)). Residues S63 and S91 each coordinate hexadecanoate.

May bind long-chain fatty acids, such as palmitate, and may play a role in lipid transport or fatty acid metabolism. In Streptococcus gordonii, this protein is DegV domain-containing protein.